Reading from the N-terminus, the 352-residue chain is C-C chemokine receptor type 5 (352 aa).

The Extracellular segment spans residues M1–A30. Sulfotyrosine is present on Y3. O-linked (GalNAc...) serine glycans are attached at residues S6 and S7. 3 positions are modified to sulfotyrosine: Y10, Y14, and Y15. 2 cysteine pairs are disulfide-bonded: C20–C269 and C101–C178. Residues R31–C58 traverse the membrane as a helical segment. At K59–Y68 the chain is on the cytoplasmic side. A helical membrane pass occupies residues L69 to Y89. The Extracellular segment spans residues A90 to Q102. A helical membrane pass occupies residues L103 to I124. Over D125–T141 the chain is Cytoplasmic. A helical membrane pass occupies residues V142–F166. The Extracellular portion of the chain corresponds to T167–M198. The helical transmembrane segment at V199–L218 threads the bilayer. Topologically, residues K219–R235 are cytoplasmic. The helical transmembrane segment at L236 to F260 threads the bilayer. At Q261–Q277 the chain is on the extracellular side. Residues A278–G301 form a helical membrane-spanning segment. Residues E302–L352 are Cytoplasmic-facing. 3 S-palmitoyl cysteine lipidation sites follow: C321, C323, and C324. Phosphoserine; by BARK1 occurs at positions 336, 337, 342, and 349.

The protein belongs to the G-protein coupled receptor 1 family. Interacts with PRAF2. Efficient ligand binding to CCL3/MIP-1alpha and CCL4/MIP-1beta requires sulfation, O-glycosylation and sialic acid modifications. Glycosylation on Ser-6 is required for efficient binding of CCL4. Interacts with GRK2. Interacts with ARRB1 and ARRB2. Interacts with CNIH4. Interacts with S100A4; this interaction stimulates T-lymphocyte chemotaxis. In terms of processing, sulfated on at least 2 of the N-terminal tyrosines. Sulfation is required for efficient binding of the chemokines, CCL3 and CCL4. Post-translationally, palmitoylation in the C-terminal is important for cell surface expression. Phosphorylation on serine residues in the C-terminal is stimulated by binding CC chemokines especially by APO-RANTES. In terms of processing, O-glycosylated, but not N-glycosylated. Ser-6 appears to be the major site even if Ser-7 may be also O-glycosylated. Also sialylated glycans present which contribute to chemokine binding. Thr-16 and Ser-17 may also be glycosylated and, if so, with small moieties such as a T-antigen.

It is found in the cell membrane. In terms of biological role, receptor for a number of inflammatory CC-chemokines including CCL3/MIP-1-alpha, CCL4/MIP-1-beta and RANTES and subsequently transduces a signal by increasing the intracellular calcium ion level. May play a role in the control of granulocytic lineage proliferation or differentiation. Participates in T-lymphocyte migration to the infection site by acting as a chemotactic receptor. This chain is C-C chemokine receptor type 5 (CCR5), found in Macaca fascicularis (Crab-eating macaque).